The sequence spans 211 residues: Large ribosomal subunit protein bL25 (211 aa).

Basic and acidic residues predominate over residues 1-18 (MAKTHEIKAERRADEGKG). The disordered stretch occupies residues 1–20 (MAKTHEIKAERRADEGKGAS).

This sequence belongs to the bacterial ribosomal protein bL25 family. CTC subfamily. Part of the 50S ribosomal subunit; part of the 5S rRNA/L5/L18/L25 subcomplex. Contacts the 5S rRNA. Binds to the 5S rRNA independently of L5 and L18.

Its function is as follows. This is one of the proteins that binds to the 5S RNA in the ribosome where it forms part of the central protuberance. The chain is Large ribosomal subunit protein bL25 from Xanthomonas oryzae pv. oryzae (strain MAFF 311018).